Reading from the N-terminus, the 1863-residue chain is Breast cancer type 1 susceptibility protein (1863 aa).

N-acetylmethionine is present on Met-1. The RING-type zinc-finger motif lies at Cys-24 to Lys-65. Lys-109 is covalently cross-linked (Glycyl lysine isopeptide (Lys-Gly) (interchain with G-Cter in SUMO2)). Position 114 is a phosphoserine (Ser-114). Residues Glu-230–His-270 form a disordered region. The span at Thr-248 to Lys-260 shows a compositional bias: basic and acidic residues. Lys-301 participates in a covalent cross-link: Glycyl lysine isopeptide (Lys-Gly) (interchain with G-Cter in SUMO2). Positions Asn-306–Lys-338 are disordered. Positions Thr-327–Lys-338 are enriched in basic and acidic residues. Residue Lys-339 forms a Glycyl lysine isopeptide (Lys-Gly) (interchain with G-Cter in SUMO2) linkage. Residues Ser-395, Ser-398, Ser-423, and Ser-434 each carry the phosphoserine modification. Residues Lys-443, Lys-459, and Lys-519 each participate in a glycyl lysine isopeptide (Lys-Gly) (interchain with G-Cter in SUMO2) cross-link. Over residues Gln-534–Gln-544 the composition is skewed to low complexity. Residues Gln-534–Pro-570 form a disordered region. Ser-551 carries the post-translational modification Phosphoserine. Residues Lys-583 and Lys-654 each participate in a glycyl lysine isopeptide (Lys-Gly) (interchain with G-Cter in SUMO2) cross-link. Residues Lys-654 to Phe-709 are disordered. Ser-694, Ser-708, and Ser-725 each carry phosphoserine. Residues Lys-734 and Lys-739 each participate in a glycyl lysine isopeptide (Lys-Gly) (interchain with G-Cter in SUMO2) cross-link. Phosphoserine is present on residues Ser-753 and Ser-840. Residues Lys-918 and Lys-987 each participate in a glycyl lysine isopeptide (Lys-Gly) (interchain with G-Cter in SUMO2) cross-link. Position 988 is a phosphoserine; by CHEK2 (Ser-988). Ser-1009 is subject to Phosphoserine. Lys-1079 is covalently cross-linked (Glycyl lysine isopeptide (Lys-Gly) (interchain with G-Cter in SUMO2)). A Phosphoserine; by ATR; in vitro modification is found at Ser-1143. The segment at Val-1181 to Leu-1216 is disordered. Ser-1189, Ser-1191, Ser-1211, Ser-1217, and Ser-1218 each carry phosphoserine. At Ser-1280 the chain carries Phosphoserine; by ATR; in vitro. The segment at Lys-1322–Ser-1387 is disordered. Ser-1328, Ser-1336, and Ser-1342 each carry phosphoserine. The span at Glu-1373–Ser-1387 shows a compositional bias: polar residues. Position 1387 is a phosphoserine; by ATM and ATR (Ser-1387). Position 1394 is a phosphothreonine; by ATR; in vitro (Thr-1394). Residues Arg-1397 to Gln-1424 are interaction with PALB2. Ser-1423 carries the phosphoserine; by ATM and ATR modification. A disordered region spans residues Glu-1440–Asp-1505. Positions Pro-1445–Glu-1470 are enriched in polar residues. Ser-1457 carries the phosphoserine; by ATR; in vitro modification. At Ser-1524 the chain carries Phosphoserine; by ATM. A Phosphoserine modification is found at Ser-1542. A disordered region spans residues Glu-1565–Ser-1596. 2 BRCT domains span residues Ser-1642–Val-1736 and Gln-1756–Ile-1855.

As to quaternary structure, heterodimer with BARD1. Part of the BRCA1-associated genome surveillance complex (BASC), which contains BRCA1, MSH2, MSH6, MLH1, ATM, BLM, PMS2 and the MRE11-RAD50-NBN protein (MRN) complex. This association could be a dynamic process changing throughout the cell cycle and within subnuclear domains. Component of the BRCA1-A complex, at least composed of BRCA1, BARD1, UIMC1/RAP80, ABRAXAS1, BRCC3/BRCC36, BABAM2 and BABAM1/NBA1. Interacts (via the BRCT domains) with ABRAXAS1 (phosphorylated form); this is important for recruitment to sites of DNA damage. Can form a heterotetramer with two molecules of ABRAXAS1 (phosphorylated form). Component of the BRCA1-RBBP8 complex. Interacts (via the BRCT domains) with RBBP8 ('Ser-327' phosphorylated form); the interaction ubiquitinates RBBP8, regulates CHEK1 activation, and involves RBBP8 in BRCA1-dependent G2/M checkpoint control on DNA damage. Associates with RNA polymerase II holoenzyme. Interacts with SMC1A, NELFB, DCLRE1C, CLSPN. Interacts with CHEK1, CHEK2, BAP1, BRCC3, UBXN1 and PCLAF. Interacts (via BRCT domains) with BRIP1 (phosphorylated form). Interacts with FANCD2 (ubiquitinated form). Interacts with H2AX (phosphorylated on 'Ser-140'). Interacts (via the BRCT domains) with ACACA (phosphorylated form); the interaction prevents dephosphorylation of ACACA. Part of a BRCA complex containing BRCA1, BRCA2 and PALB2. Interacts directly with PALB2; the interaction is essential for its function in HRR. Interacts directly with BRCA2; the interaction occurs only in the presence of PALB2 which serves as the bridging protein. Interacts (via the BRCT domains) with LMO4; the interaction represses the transcriptional activity of BRCA1. Interacts (via the BRCT domains) with CCAR2 (via N-terminus); the interaction represses the transcriptional activator activity of BRCA1. Interacts with EXD2. Interacts (via C-terminus) with DHX9; this interaction is direct and links BRCA1 to the RNA polymerase II holoenzyme. Interacts with DNA helicase ZGRF1; the interaction is increased following DNA damage induction. Post-translationally, phosphorylated in response to IR, UV, and various stimuli that cause checkpoint activation, probably by ATM or ATR. Phosphorylation at Ser-988 by CHEK2 regulates mitotic spindle assembly. Phosphorylation by AURKA regulates centrosomal microtubule nucleation. Autoubiquitinated, undergoes 'Lys-6'-linked polyubiquitination. 'Lys-6'-linked polyubiquitination does not promote degradation. As to expression, isoform 1 and isoform 3 are widely expressed. Isoform 3 is reduced or absent in several breast and ovarian cancer cell lines.

The protein resides in the nucleus. It localises to the chromosome. Its subcellular location is the cytoplasm. The enzyme catalyses S-ubiquitinyl-[E2 ubiquitin-conjugating enzyme]-L-cysteine + [acceptor protein]-L-lysine = [E2 ubiquitin-conjugating enzyme]-L-cysteine + N(6)-ubiquitinyl-[acceptor protein]-L-lysine.. The protein operates within protein modification; protein ubiquitination. The E3 ubiquitin-protein ligase activity is inhibited by phosphorylation by AURKA. Activity is increased by phosphatase treatment. In terms of biological role, E3 ubiquitin-protein ligase that specifically mediates the formation of 'Lys-6'-linked polyubiquitin chains and plays a central role in DNA repair by facilitating cellular responses to DNA damage. It is unclear whether it also mediates the formation of other types of polyubiquitin chains. The BRCA1-BARD1 heterodimer coordinates a diverse range of cellular pathways such as DNA damage repair, ubiquitination and transcriptional regulation to maintain genomic stability. Regulates centrosomal microtubule nucleation. Required for appropriate cell cycle arrests after ionizing irradiation in both the S-phase and the G2 phase of the cell cycle. Required for FANCD2 targeting to sites of DNA damage. Inhibits lipid synthesis by binding to inactive phosphorylated ACACA and preventing its dephosphorylation. Contributes to homologous recombination repair (HRR) via its direct interaction with PALB2, fine-tunes recombinational repair partly through its modulatory role in the PALB2-dependent loading of BRCA2-RAD51 repair machinery at DNA breaks. Component of the BRCA1-RBBP8 complex which regulates CHEK1 activation and controls cell cycle G2/M checkpoints on DNA damage via BRCA1-mediated ubiquitination of RBBP8. Acts as a transcriptional activator. This chain is Breast cancer type 1 susceptibility protein (BRCA1), found in Homo sapiens (Human).